Here is an 889-residue protein sequence, read N- to C-terminus: F-BAR domain only protein 1 (889 aa).

One can recognise an F-BAR domain in the interval 1 to 248 (MSYFGEHFWG…NIENVSVEML (248 aa)). Residues 1–275 (MSYFGEHFWG…LDFEAYSAAA (275 aa)) are mediates membrane-binding. Residues 156-195 (TSQKEMDKAETKTKKAAESLRRSVEKYNSARADFEQKMLD) adopt a coiled-coil conformation. The segment at 267 to 442 (DFEAYSAAAL…KNLFGPPLES (176 aa)) is mediates interaction with the adaptor protein complex AP-2. Residues 294–352 (LSRREREPEPPAAVDFLEPDSGTCPEVDEEGFTVRPDVTQNSTAEPSRFSSSDSDFDDE) form a disordered region. S295, S347, and S372 each carry phosphoserine. A disordered region spans residues 382–596 (ATAGSLILPP…SPLGSSAAST (215 aa)). Residues 450–469 (TGSSSLGFTSSPSPFSSSSP) are compositionally biased toward low complexity. Residues 496–511 (PGTPQSPPSCRAPPPE) show a composition bias toward pro residues. S530 is modified (phosphoserine). Low complexity predominate over residues 580–596 (LSRSLSPSPLGSSAAST). A mediates interaction with AGFG1, CALM, DAB2, EPS15, EPS15R, ITSN1 and clathrin region spans residues 609–889 (HGVSRGPSPV…FATGMYLVSC (281 aa)). At S616 the chain carries Phosphoserine. Residues 625 to 888 (ALPIATAFTE…RFATGMYLVS (264 aa)) form the MHD domain. A disordered region spans residues 826-849 (AGGSGRLSASWEPLSGPSTPSPVA).

This sequence belongs to the FCHO family. As to quaternary structure, may oligomerize and form homotetramer. Interacts with AP2A2 and AP2B1; 2 subunits of the adaptor protein complex AP-2. Interacts with DAB2. Interacts with clathrin (CLTC or CLTCL1). Interacts with EPS15, EPS15R and ITSN1. Interacts with AGFG1 and CALM. May interact with ACVR1; linking this receptor to clathrin-mediated endocytosis. Predominantly expressed in lymphoid cells.

It localises to the membrane. It is found in the clathrin-coated pit. In terms of biological role, functions in an early step of clathrin-mediated endocytosis. Has both a membrane binding/bending activity and the ability to recruit proteins essential to the formation of functional clathrin-coated pits. May regulate Bmp signaling by regulating clathrin-mediated endocytosis of Bmp receptors. Involved in the regulation of T-cell poliferation and activation. Affects TCR clustering upon receptor triggering and modulates its internalisation, playing a role in TCR-dependent T-cell activation. This Homo sapiens (Human) protein is F-BAR domain only protein 1.